A 245-amino-acid chain; its full sequence is Adenylate kinase (245 aa).

15–20 (GSGKGT) provides a ligand contact to ATP. Positions 35–64 (SSGDLLRGAVSKDTPLSQEIKSYLDQGKLL) are NMP. AMP contacts are provided by residues S36, R41, 62–64 (KLL), 103–106 (GFPR), and Q110. The interval 143-176 (SRYICPACQGIYNEQQGFSSCPKCSVELIRRSDD) is LID. R144 provides a ligand contact to ATP. The Zn(2+) site is built by C147 and C150. ATP is bound at residue 153–154 (IY). Residues C163 and C166 each coordinate Zn(2+). Positions 173 and 184 each coordinate AMP. A212 lines the ATP pocket.

This sequence belongs to the adenylate kinase family. As to quaternary structure, monomer.

It localises to the cytoplasm. It catalyses the reaction AMP + ATP = 2 ADP. The protein operates within purine metabolism; AMP biosynthesis via salvage pathway; AMP from ADP: step 1/1. In terms of biological role, catalyzes the reversible transfer of the terminal phosphate group between ATP and AMP. Plays an important role in cellular energy homeostasis and in adenine nucleotide metabolism. The sequence is that of Adenylate kinase from Chlamydia trachomatis serovar L2 (strain ATCC VR-902B / DSM 19102 / 434/Bu).